The primary structure comprises 675 residues: MFLKLLTIFFFFFFNLIFQSSSQSLNFAYNNGFNPPTDLSIQGITTVTPNGLLKLTNTTVQKTGHAFYTKPIRFKDSPNGTVSSFSTSFVFAIHSQIAILSGHGIAFVVAPNASLPYGNPSQYIGLFNLANNGNETNHVFAVELDTILSTEFNDTNDNHVGIDINSLKSVQSSPAGYWDEKGQFKNLTLISRKPMQVWVDYDGRTNKIDVTMAPFNEDKPTRPLVTAVRDLSSVLLQDMYVGFSSATGSVLSEHYILGWSFGLNEKAPPLALSRLPKLPRFEPKRISEFYKIGMPLISLFLIFSFIFLVCYIVRRRRKFAEELEEWEKEFGKNRFRFKDLYYATKGFKEKGLLGTGGFGSVYKGVMPGTKLEIAVKRVSHESRQGMKEFVAEIVSIGRMSHRNLVPLLGYCRRRGELLLVYDYMPNGSLDKYLYNTPEVTLNWKQRIKVILGVASGLFYLHEEWEQVVIHRDVKASNVLLDGELNGRLGDFGLARLYDHGSDPQTTHVVGTLGYLAPEHTRTGRATMATDVFAFGAFLLEVACGRRPIEFQQETDETFLLVDWVFGLWNKGDILAAKDPNMGSECDEKEVEMVLKLGLLCSHSDPRARPSMRQVLHYLRGDAKLPELSPLDLSGSGMMFGVHDGFSELGMSYSSSVFKGFTGGSSIADSQLSGGR.

Residues 1-22 (MFLKLLTIFFFFFFNLIFQSSS) form the signal peptide. The Extracellular portion of the chain corresponds to 23–291 (QSLNFAYNNG…EPKRISEFYK (269 aa)). A legume-lectin like region spans residues 25–261 (LNFAYNNGFN…SEHYILGWSF (237 aa)). N-linked (GlcNAc...) asparagine glycosylation is found at asparagine 57, asparagine 79, asparagine 112, asparagine 134, asparagine 153, and asparagine 186. The helical transmembrane segment at 292 to 312 (IGMPLISLFLIFSFIFLVCYI) threads the bilayer. Residues 313-675 (VRRRRKFAEE…IADSQLSGGR (363 aa)) lie on the Cytoplasmic side of the membrane. Residues 347–624 (FKEKGLLGTG…LHYLRGDAKL (278 aa)) form the Protein kinase domain. ATP is bound by residues 353-361 (LGTGGFGSV) and lysine 376. The Proton acceptor role is filled by aspartate 472.

It in the C-terminal section; belongs to the protein kinase superfamily. Ser/Thr protein kinase family. The protein in the N-terminal section; belongs to the leguminous lectin family.

It is found in the membrane. The enzyme catalyses L-seryl-[protein] + ATP = O-phospho-L-seryl-[protein] + ADP + H(+). It catalyses the reaction L-threonyl-[protein] + ATP = O-phospho-L-threonyl-[protein] + ADP + H(+). In Arabidopsis thaliana (Mouse-ear cress), this protein is L-type lectin-domain containing receptor kinase IV.1 (LECRK41).